We begin with the raw amino-acid sequence, 271 residues long: Formamidopyrimidine-DNA glycosylase (271 aa).

Pro-2 acts as the Schiff-base intermediate with DNA in catalysis. Glu-3 functions as the Proton donor in the catalytic mechanism. Lys-57 acts as the Proton donor; for beta-elimination activity in catalysis. Residues His-90, Arg-109, and Lys-151 each coordinate DNA. The segment at 236–270 (HVYGRGGKTCTQCGHMLSEIKLGQRATVFCSLCQQ) adopts an FPG-type zinc-finger fold. Arg-260 acts as the Proton donor; for delta-elimination activity in catalysis.

This sequence belongs to the FPG family. Monomer. Zn(2+) is required as a cofactor.

It carries out the reaction Hydrolysis of DNA containing ring-opened 7-methylguanine residues, releasing 2,6-diamino-4-hydroxy-5-(N-methyl)formamidopyrimidine.. The catalysed reaction is 2'-deoxyribonucleotide-(2'-deoxyribose 5'-phosphate)-2'-deoxyribonucleotide-DNA = a 3'-end 2'-deoxyribonucleotide-(2,3-dehydro-2,3-deoxyribose 5'-phosphate)-DNA + a 5'-end 5'-phospho-2'-deoxyribonucleoside-DNA + H(+). Functionally, involved in base excision repair of DNA damaged by oxidation or by mutagenic agents. Acts as a DNA glycosylase that recognizes and removes damaged bases. Has a preference for oxidized purines, such as 7,8-dihydro-8-oxoguanine (8-oxoG). Has AP (apurinic/apyrimidinic) lyase activity and introduces nicks in the DNA strand. Cleaves the DNA backbone by beta-delta elimination to generate a single-strand break at the site of the removed base with both 3'- and 5'-phosphates. This Shewanella pealeana (strain ATCC 700345 / ANG-SQ1) protein is Formamidopyrimidine-DNA glycosylase.